A 391-amino-acid polypeptide reads, in one-letter code: Probable malate dehydrogenase 1 (391 aa).

68–74 is an NAD(+) binding site; sequence GAAGQIA. Substrate is bound by residues Arg149 and Arg155. NAD(+)-binding positions include Asn162, Gln169, and 186-188; that span reads VGN. Positions 188 and 219 each coordinate substrate. The active-site Proton acceptor is the His244.

It belongs to the LDH/MDH superfamily. MDH type 2 family. Homodimer.

It catalyses the reaction (S)-malate + NAD(+) = oxaloacetate + NADH + H(+). Its function is as follows. Catalyzes the reversible oxidation of malate to oxaloacetate. The sequence is that of Probable malate dehydrogenase 1 (mdhA) from Dictyostelium discoideum (Social amoeba).